The following is a 123-amino-acid chain: Small ribosomal subunit protein uS13c (123 aa).

Positions 90 to 123 (GKRHRNNLPVRGQRTRTNARSRRGSKKTVTGKKK) are disordered. Positions 102–123 (QRTRTNARSRRGSKKTVTGKKK) are enriched in basic residues.

The protein belongs to the universal ribosomal protein uS13 family. Part of the 30S ribosomal subunit.

It is found in the plastid. It localises to the chloroplast. Located at the top of the head of the 30S subunit, it contacts several helices of the 16S rRNA. This chain is Small ribosomal subunit protein uS13c, found in Trieres chinensis (Marine centric diatom).